Consider the following 331-residue polypeptide: tRNA U34 carboxymethyltransferase (331 aa).

Carboxy-S-adenosyl-L-methionine-binding positions include Lys-91, Trp-105, Lys-110, Gly-130, 152 to 154 (DPS), 181 to 182 (IE), Met-196, Tyr-200, and Arg-315.

It belongs to the class I-like SAM-binding methyltransferase superfamily. CmoB family. In terms of assembly, homotetramer.

The enzyme catalyses carboxy-S-adenosyl-L-methionine + 5-hydroxyuridine(34) in tRNA = 5-carboxymethoxyuridine(34) in tRNA + S-adenosyl-L-homocysteine + H(+). Its function is as follows. Catalyzes carboxymethyl transfer from carboxy-S-adenosyl-L-methionine (Cx-SAM) to 5-hydroxyuridine (ho5U) to form 5-carboxymethoxyuridine (cmo5U) at position 34 in tRNAs. This Shewanella baltica (strain OS155 / ATCC BAA-1091) protein is tRNA U34 carboxymethyltransferase.